The sequence spans 401 residues: MEKKKVVLAYSGGLDTSVAIKWLQEKNYDIIALCLDLGEGKDLAFVKEKALSVGAIKSYMIDVQEEFANEYALMAMQAHTLYEGKYPLVSALSRPLIAKKLVEIAEQEGATAVAHGCTGKGNDQVRFEVSIQALNPYLEVIAPVREWKWSREEEIAYAKENNVPIPINLDSPFSIDQNLWGRSNECGILEDPWAAPPEDAYEMTLALEDTPNKPEFVEIGFEAGVPTTLNGTAYPLSELIKTLNALAGKHGVGRIDHVENRLVGIKSREVYECPAAMTLITAHKELEDLTLVKEVAHFKPMIEQKITELIYNGLWFSPLKQALHAFLQETQKNVTGTVRVKLFKGHAIVEGRKSEYSLYDEKLATYTAQDEFNHDAAVGFISLFGLPTKVYSQVNQKKVEA.

9 to 17 is an ATP binding site; that stretch reads AYSGGLDTS. Tyr86 is an L-citrulline binding site. Gly116 provides a ligand contact to ATP. Residues Thr118, Asn122, and Asp123 each contribute to the L-aspartate site. L-citrulline is bound at residue Asn122. Residues Arg126, Ser174, Ser183, Glu259, and Tyr271 each coordinate L-citrulline.

Belongs to the argininosuccinate synthase family. Type 1 subfamily. In terms of assembly, homotetramer.

It localises to the cytoplasm. It carries out the reaction L-citrulline + L-aspartate + ATP = 2-(N(omega)-L-arginino)succinate + AMP + diphosphate + H(+). It functions in the pathway amino-acid biosynthesis; L-arginine biosynthesis; L-arginine from L-ornithine and carbamoyl phosphate: step 2/3. This is Argininosuccinate synthase from Bacillus anthracis (strain A0248).